Here is a 128-residue protein sequence, read N- to C-terminus: Large ribosomal subunit protein bL17 (128 aa).

The protein belongs to the bacterial ribosomal protein bL17 family. In terms of assembly, part of the 50S ribosomal subunit. Contacts protein L32.

The protein is Large ribosomal subunit protein bL17 of Streptococcus equi subsp. equi (strain 4047).